Reading from the N-terminus, the 1065-residue chain is Alpha-L-arabinofuranosidase (1065 aa).

The first 26 residues, 1-26, serve as a signal peptide directing secretion; that stretch reads MKHWKKMAASLIAISTMVAVVPTTYA. The region spanning 277-346 is the BIG2 domain; it reads VVNNKLTLIE…TTELGGVKAE (70 aa). The tract at residues 997-1031 is disordered; that stretch reads KAPTNPGEGDGDKGDGNKPTTPTTGDKTNVNKPGS. Residues 1014-1031 show a composition bias toward polar residues; the sequence is KPTTPTTGDKTNVNKPGS. The helical transmembrane segment at 1040–1060 threads the bilayer; it reads VLGLGGAVVALAIAGISLTLW.

It belongs to the glycosyl hydrolase 43 family.

The protein localises to the cell membrane. The enzyme catalyses Hydrolysis of terminal non-reducing alpha-L-arabinofuranoside residues in alpha-L-arabinosides.. Involved in the type II arabinogalactan (AG) side chains degradation. Releases arabinofuranose (Araf) from alpha-1,3-Araf-substituted beta-1,6-galactooligosaccharides. Can use radish root AGP, larch AG and arabinan. Shows weaker activity with gum arabic and arabinoxylan. This is Alpha-L-arabinofuranosidase from Bifidobacterium longum subsp. longum (strain ATCC 15707 / DSM 20219 / JCM 1217 / NCTC 11818 / E194b).